The sequence spans 1249 residues: Cell adhesion molecule-related/down-regulated by oncogenes (1249 aa).

Positions 1–25 (MHSDPGPWHPLLCFLVLALSTSANS) are cleaved as a signal peptide. Over 26 to 957 (DVTPRFTSKP…PSHSPTRNGD (932 aa)) the chain is Extracellular. 5 Ig-like C2-type domains span residues 29 to 113 (PRFT…KSVS), 120 to 212 (NDFE…LKLS), 217 to 307 (PRVD…VYYT), 314 to 400 (PSVS…ATVH), and 406 to 517 (PVIV…AYLT). Disulfide bonds link cysteine 50/cysteine 98, cysteine 142/cysteine 192, and cysteine 244/cysteine 292. N-linked (GlcNAc...) asparagine glycosylation is found at asparagine 181, asparagine 289, asparagine 296, asparagine 344, and asparagine 428. Cystine bridges form between cysteine 335-cysteine 382 and cysteine 427-cysteine 501. Disordered stretches follow at residues 528–585 (EDIT…SPPQ) and 671–690 (TSKE…PPIG). Over residues 545–566 (SETRVPDHSQINEHKPEPRVTE) the composition is skewed to basic and acidic residues. Fibronectin type-III domains lie at 577–675 (APII…SKER), 721–815 (APDR…VAGY), and 826–923 (GPRI…TKAR). The N-linked (GlcNAc...) asparagine glycan is linked to asparagine 870. A disordered region spans residues 929–952 (SEYPVLDLSTPSVPDRSSSPSHSP). Residues 937–952 (STPSVPDRSSSPSHSP) show a composition bias toward low complexity. The chain crosses the membrane as a helical span at residues 958 to 978 (FLYVIVGCVLGGMVLILLAFI). Residues 979–1249 (AMCLLKNRQQ…DHPQLQTQEA (271 aa)) are Cytoplasmic-facing. The segment at 1158-1202 (NCSEEIEEDQNEKETQLSANSVCPEEATQTGTEQHEGEDCTKTED) is disordered. Residues 1159–1168 (CSEEIEEDQN) show a composition bias toward acidic residues. Residues 1173–1189 (QLSANSVCPEEATQTGT) show a composition bias toward polar residues. Residues 1190–1202 (EQHEGEDCTKTED) are compositionally biased toward basic and acidic residues.

The protein localises to the cell membrane. In terms of biological role, component of a cell-surface receptor complex that mediates cell-cell interactions between muscle precursor cells. Promotes differentiation of myogenic cells. In Xenopus laevis (African clawed frog), this protein is Cell adhesion molecule-related/down-regulated by oncogenes (cdon).